The following is a 122-amino-acid chain: MIQPQTHLNVADNSGARELMCIRVIGASNRRYAHIGDVIVAVIKEAVPNTPLERSEVIRAVIVRTRKELKRDNGMIIRYDDNAAVVIDQEGNPKGTRIFGAIARELRQLNFTKIVSLAPEVL.

Belongs to the universal ribosomal protein uL14 family. In terms of assembly, part of the 50S ribosomal subunit.

It is found in the plastid. The protein localises to the chloroplast. In terms of biological role, binds to 23S rRNA. The sequence is that of Large ribosomal subunit protein uL14c from Gossypium barbadense (Sea Island cotton).